Consider the following 110-residue polypeptide: uncharacterized protein (110 aa).

A disordered region spans residues 1–72; it reads MWRSSNQRGV…NHRNIHLRNP (72 aa). Over residues 10–23 the composition is skewed to basic residues; the sequence is VSRRRDKSMRKYTR. Positions 48–57 are enriched in polar residues; that stretch reads KNTYTGNISS.

This is an uncharacterized protein from Human herpesvirus 6A (strain Uganda-1102) (HHV-6 variant A).